Consider the following 137-residue polypeptide: Probable glycine cleavage system H protein 1 (137 aa).

The Lipoyl-binding domain occupies 31–113 (VAVIGITDYA…YGEGWIFKLK (83 aa)). Lys-72 is modified (N6-lipoyllysine).

This sequence belongs to the GcvH family. The glycine cleavage system is composed of four proteins: P, T, L and H. The cofactor is (R)-lipoate.

Its function is as follows. The glycine cleavage system catalyzes the degradation of glycine. The H protein shuttles the methylamine group of glycine from the P protein to the T protein. This chain is Probable glycine cleavage system H protein 1, found in Saccharolobus solfataricus (strain ATCC 35092 / DSM 1617 / JCM 11322 / P2) (Sulfolobus solfataricus).